The sequence spans 394 residues: Phloroisovalerophenone synthase (394 aa).

Cys166 is an active-site residue.

This sequence belongs to the thiolase-like superfamily. Chalcone/stilbene synthases family. Homodimer. Expressed in lupulin gland. Present at low levels in leaves but accumulates in cones.

The enzyme catalyses 3-methylbutanoyl-CoA + 3 malonyl-CoA + 3 H(+) = phlorisovalerophenone + 3 CO2 + 4 CoA. It carries out the reaction (E)-4-coumaroyl-CoA + 3 malonyl-CoA + 3 H(+) = 2',4,4',6'-tetrahydroxychalcone + 3 CO2 + 4 CoA. The catalysed reaction is 2-methylpropanoyl-CoA + 3 malonyl-CoA + 3 H(+) = phlorisobutanophenone + 3 CO2 + 4 CoA. It functions in the pathway secondary metabolite biosynthesis. In terms of biological role, involved in the biosynthesis of prenylated phenolics natural products which contribute to the bitter taste of beer and display broad biological activities. Polyketide synthase that can use 3-methylbutanoyl-CoA (isovaleryl-CoA) and 2-methylpropanoyl-CoA (isobutyryl-CoA) as substrates to produce phlorisovalerophenone (PIVP) and phlorisobutyrophenone (2-methyl-1-(2,4,6-trihydroxyphenyl)propan-1-one), respectively, intermediates in the biosynthesis of the bitter acids (alpha and beta) acids. Can also produce naringenin-chalcone (2',4,4',6'-tetrahydroxychalcone) from 4-coumaroyl-CoA with a lower efficiency. The protein is Phloroisovalerophenone synthase of Humulus lupulus (European hop).